Consider the following 311-residue polypeptide: MRTGKGNQEEEDYGEEDFNSKREGPSSNTTVHSNRDSKENDKASAIRSKHSVTEQRRRSKINERFQILRELIPNSEQKRDTASFLLEVIDYVQYLQEKVQKYEGSYPGWSQEPTKLTPWRNNHWRVQSLGNHPVAINNGSGPGIPFPGKFEDNTVTSTPAIIAEPQIPIESDKARAITGISIESQPELDDKGLPPLQPILPMVQGEQANECPATSDGLGQSNDLVIEGGTISISSAYSHELLSSLTQALQNAGIDLSQAKLSVQIDLGKRANQGLTHEEPSSKNPLSYDTQGRDSSVEEESEHSHKRMKTL.

Disordered regions lie at residues 1-60 and 271-311; these read MRTG…RRSK and ANQG…MKTL. 2 stretches are compositionally biased toward basic and acidic residues: residues 33-44 and 51-60; these read SNRDSKENDKAS and SVTEQRRRSK. Positions 45 to 95 constitute a bHLH domain; it reads AIRSKHSVTEQRRRSKINERFQILRELIPNSEQKRDTASFLLEVIDYVQYL.

As to quaternary structure, homodimer. Interacts with the N-terminus of BZR2/BES1. Expressed constitutively in roots, leaves, stems, and flowers.

It localises to the nucleus. In terms of biological role, positive brassinosteroid-signaling protein. In Arabidopsis thaliana (Mouse-ear cress), this protein is Transcription factor BIM2 (BIM2).